Reading from the N-terminus, the 35-residue chain is Conotoxin Cal6.1d (35 aa).

A propeptide spanning residues 1-8 is cleaved from the precursor; the sequence is GLTRPSKR. 3 cysteine pairs are disulfide-bonded: Cys-9–Cys-25, Cys-16–Cys-29, and Cys-24–Cys-34.

The protein belongs to the conotoxin O1 superfamily. As to expression, expressed by the venom duct.

The protein resides in the secreted. Functionally, probable neurotoxin with unknown target. Possibly targets ion channels. This is Conotoxin Cal6.1d from Californiconus californicus (California cone).